Reading from the N-terminus, the 358-residue chain is Peroxidase 54 (358 aa).

The N-terminal stretch at 1–31 (MAVTSSSSTCDGFFIISLIVIVSSLFGTSSA) is a signal peptide. Q32 carries the post-translational modification Pyrrolidone carboxylic acid. N34 and N44 each carry an N-linked (GlcNAc...) asparagine glycan. 4 cysteine pairs are disulfide-bonded: C42/C122, C75/C80, C128/C330, and C207/C239. The active-site Proton acceptor is the H73. D74, V77, G79, D81, and S83 together coordinate Ca(2+). N103, N161, and N166 each carry an N-linked (GlcNAc...) asparagine glycan. P170 provides a ligand contact to substrate. N178 carries N-linked (GlcNAc...) asparagine glycosylation. A heme b-binding site is contributed by H200. T201 contributes to the Ca(2+) binding site. 3 N-linked (GlcNAc...) asparagine glycosylation sites follow: N218, N228, and N242. Positions 252, 255, and 260 each coordinate Ca(2+). N-linked (GlcNAc...) asparagine glycosylation occurs at N298.

Belongs to the peroxidase family. Classical plant (class III) peroxidase subfamily. Heme b serves as cofactor. It depends on Ca(2+) as a cofactor.

The protein resides in the secreted. It is found in the vacuole. It carries out the reaction 2 a phenolic donor + H2O2 = 2 a phenolic radical donor + 2 H2O. Its function is as follows. Removal of H(2)O(2), oxidation of toxic reductants, biosynthesis and degradation of lignin, suberization, auxin catabolism, response to environmental stresses such as wounding, pathogen attack and oxidative stress. These functions might be dependent on each isozyme/isoform in each plant tissue. The sequence is that of Peroxidase 54 (PER54) from Arabidopsis thaliana (Mouse-ear cress).